Reading from the N-terminus, the 326-residue chain is Flap endonuclease 1 (326 aa).

The interval 1–98 (MGVQFNDSIP…KTREERRKVK (98 aa)) is N-domain. The Mg(2+) site is built by D27, D80, E152, E154, D173, D175, and D224. The tract at residues 116 to 245 (DMQKYAKRIN…KKALTIIKNK (130 aa)) is I-domain. The tract at residues 318–326 (SQTSLDSWF) is interaction with PCNA.

This sequence belongs to the XPG/RAD2 endonuclease family. FEN1 subfamily. As to quaternary structure, interacts with PCNA. PCNA stimulates the nuclease activity without altering cleavage specificity. Mg(2+) serves as cofactor.

In terms of biological role, structure-specific nuclease with 5'-flap endonuclease and 5'-3' exonuclease activities involved in DNA replication and repair. During DNA replication, cleaves the 5'-overhanging flap structure that is generated by displacement synthesis when DNA polymerase encounters the 5'-end of a downstream Okazaki fragment. Binds the unpaired 3'-DNA end and kinks the DNA to facilitate 5' cleavage specificity. Cleaves one nucleotide into the double-stranded DNA from the junction in flap DNA, leaving a nick for ligation. Also involved in the base excision repair (BER) pathway. Acts as a genome stabilization factor that prevents flaps from equilibrating into structures that lead to duplications and deletions. Also possesses 5'-3' exonuclease activity on nicked or gapped double-stranded DNA. This Methanococcus aeolicus (strain ATCC BAA-1280 / DSM 17508 / OCM 812 / Nankai-3) protein is Flap endonuclease 1.